A 209-amino-acid polypeptide reads, in one-letter code: High mobility group protein B2 (209 aa).

Lysine 3 carries the N6-acetyllysine modification. The HMG box 1 DNA-binding region spans 9-79 (PRGKMSSYAF…RYDREMKNYV (71 aa)). Cysteine 23 carries the cysteine sulfonic acid (-SO3H); alternate modification. Cysteine 23 and cysteine 45 are joined by a disulfide. Lysine 30 bears the N6-acetyllysine mark. The residue at position 35 (serine 35) is a Phosphoserine. Residue lysine 43 is modified to N6-acetyllysine. Residue cysteine 45 is modified to Cysteine sulfonic acid (-SO3H); alternate. Basic and acidic residues predominate over residues 52–76 (MSAKEKSKFEDMAKSDKARYDREMK). Disordered regions lie at residues 52–150 (MSAK…KAAK) and 162–209 (YRAK…EDEE). Lysine 90 bears the N6-acetyllysine mark. Positions 95–163 (PKRPPSAFFL…KYEKDIAAYR (69 aa)) form a DNA-binding region, HMG box 2. Phosphoserine is present on serine 100. Cysteine 106 carries the cysteine sulfonic acid (-SO3H) modification. Composition is skewed to basic and acidic residues over residues 107-117 (SEHRPKIKSEH), 137-150 (SAKD…KAAK), and 162-172 (YRAKGKSEAGK). Residues lysine 114 and lysine 141 each carry the N6-acetyllysine modification. The segment at 165-180 (KGKSEAGKKGPGRPTG) is required for chemotactic activity. Over residues 187-209 (PEDEEEEEEEEDEDEEEEDEDEE) the composition is skewed to acidic residues.

The protein belongs to the HMGB family. As to quaternary structure, interacts with POU2F2, POU2F1 and POU3F1. Component of the RAG complex composed of core components RAG1 and RAG2, and associated component HMGB1 or HMGB2. Component of the SET complex, composed of at least ANP32A, APEX1, HMGB2, NME1, SET and TREX1. Directly interacts with SET. Interacts with LEF1. Post-translationally, reduction/oxidation of cysteine residues Cys-23, Cys-45 and Cys-106 and a possible intramolecular disulfide bond involving Cys-23 and Cys-45 give rise to different redox forms with specific functional activities in various cellular compartments: 1- fully reduced HMGB2 (HMGB2C23hC45hC106h), 2- disulfide HMGB2 (HMGB2C23-C45C106h) and 3- sulfonyl HMGB2 (HMGB2C23soC45soC106so).

The protein resides in the nucleus. It is found in the chromosome. Its subcellular location is the cytoplasm. It localises to the secreted. In terms of biological role, multifunctional protein with various roles in different cellular compartments. May act in a redox sensitive manner. In the nucleus is an abundant chromatin-associated non-histone protein involved in transcription, chromatin remodeling and V(D)J recombination and probably other processes. Binds DNA with a preference to non-canonical DNA structures such as single-stranded DNA. Can bent DNA and enhance DNA flexibility by looping thus providing a mechanism to promote activities on various gene promoters by enhancing transcription factor binding and/or bringing distant regulatory sequences into close proximity. Involved in V(D)J recombination by acting as a cofactor of the RAG complex: acts by stimulating cleavage and RAG protein binding at the 23 bp spacer of conserved recombination signal sequences (RSS). Proposed to be involved in the innate immune response to nucleic acids by acting as a cytoplasmic promiscuous immunogenic DNA/RNA sensor which cooperates with subsequent discriminative sensing by specific pattern recognition receptors. In the extracellular compartment acts as a chemokine. Promotes proliferation and migration of endothelial cells implicating AGER/RAGE. Has antimicrobial activity in gastrointestinal epithelial tissues. Involved in inflammatory response to antigenic stimulus coupled with pro-inflammatory activity. May play a role in germ cell differentiation. Involved in modulation of neurogenesis probably by regulation of neural stem proliferation. Involved in articular cartilage surface maintenance implicating LEF1 and the Wnt/beta-catenin pathway. This Bos taurus (Bovine) protein is High mobility group protein B2 (HMGB2).